The primary structure comprises 2479 residues: Centrosomal protein of 290 kDa (2479 aa).

The tract at residues Met1–Phe695 is self-association (with itself or C-terminus). Coiled coils occupy residues Met59–Lys565, Ser598–Asp664, Ala697–Lys931, Ser958–Ala1027, Gln1071–Arg1498, His1533–Leu1584, and Asp1635–Leu2452. Basic and acidic residues predominate over residues Ala149–Arg163. The tract at residues Ala149–Arg168 is disordered. Positions Asp696 to Leu896 are interaction with IQCB1. Residues Thr1966 to Tyr2479 are self-association (with itself or N-terminus). The disordered stretch occupies residues Ser2458 to Tyr2479.

Part of the tectonic-like complex (also named B9 complex). Interacts with ATF4 via its N-terminal region. Associates with the BBSome complex, interacting (via N-terminus) with BBS4. Interacts with IQCB1/NPHP5; IQCB1 and CEP290/NPHP6 are proposed to form a functional NPHP5-6 module localized to the centrosome. Interacts with NPHP4; the interaction likely requires additional interactors. Interacts with ZNF423, FAM161A, CEP162, CEP162, CEP131, TALPID3, CCDC13, CC2D2A, RPGRIP1. Can self-associate (homo- or heteromeric). Interacts with CCP110; required for suppressing cilia formation. Interacts with RPGR. Associates (via C-terminus) with microtubules; association to microtubule is reduced in response to cellular stress, such as ultraviolet light (UV) radiation or heat shock, in a process that requires p38 MAP kinase signaling. Interacts with FAM161A. Interacts with PCM1. Interacts with CCDC66. Interacts with ARMC9 and CSPP1. Post-translationally, ubiquitinated. May undergo monoubiquitination; monoubiquitination is inhibited in response to cellular stress, such as ultraviolet light (UV) radiation or heat shock, but does not cause its displacement from centriolar satellites. In terms of tissue distribution, ubiquitous. Expressed strongly in placenta and weakly in brain.

The protein localises to the cytoplasm. It is found in the cytoskeleton. The protein resides in the microtubule organizing center. Its subcellular location is the centrosome. It localises to the centriolar satellite. The protein localises to the nucleus. It is found in the cell projection. The protein resides in the cilium. Its subcellular location is the cilium basal body. It localises to the centriole. The protein localises to the cytoplasmic vesicle. Functionally, involved in early and late steps in cilia formation. Its association with CCP110 is required for inhibition of primary cilia formation by CCP110. May play a role in early ciliogenesis in the disappearance of centriolar satellites and in the transition of primary ciliar vesicles (PCVs) to capped ciliary vesicles (CCVs). Required for the centrosomal recruitment of RAB8A and for the targeting of centriole satellite proteins to centrosomes such as of PCM1. Required for the correct localization of ciliary and phototransduction proteins in retinal photoreceptor cells; may play a role in ciliary transport processes. Required for efficient recruitment of RAB8A to primary cilium. In the ciliary transition zone is part of the tectonic-like complex which is required for tissue-specific ciliogenesis and may regulate ciliary membrane composition. Involved in regulation of the BBSome complex integrity, specifically for presence of BBS2, BBS5 and BBS8/TTC8 in the complex, and in ciliary targeting of selected BBSome cargos. May play a role in controlling entry of the BBSome complex to cilia possibly implicating IQCB1/NPHP5. Activates ATF4-mediated transcription. The protein is Centrosomal protein of 290 kDa (CEP290) of Homo sapiens (Human).